Here is a 688-residue protein sequence, read N- to C-terminus: Glycine--tRNA ligase beta subunit (688 aa).

This sequence belongs to the class-II aminoacyl-tRNA synthetase family. Tetramer of two alpha and two beta subunits.

It is found in the cytoplasm. The enzyme catalyses tRNA(Gly) + glycine + ATP = glycyl-tRNA(Gly) + AMP + diphosphate. This chain is Glycine--tRNA ligase beta subunit, found in Haemophilus influenzae (strain PittEE).